A 1087-amino-acid polypeptide reads, in one-letter code: Gelsolin-related protein of 125 kDa (1087 aa).

The interval 1–40 (MEEDNIVDSKEIENNVEDKKEETPSSSPSPSSSLQQQQEE) is disordered. Residues 7–23 (VDSKEIENNVEDKKEET) are compositionally biased toward basic and acidic residues. Positions 24-40 (PSSSPSPSSSLQQQQEE) are enriched in low complexity. 4 Gelsolin-like repeats span residues 73–146 (PFHF…PTFL), 183–286 (FLFK…FSKW), 335–442 (GKLL…FGTE), and 465–538 (TQLF…DNFW). The stretch at 550 to 598 (INTFINENKEEKEKEEEEKEEEEEEEEEEEEEEEEEKDNNKTTTIIKHL) forms a coiled coil. Residues 555–592 (NENKEEKEKEEEEKEEEEEEEEEEEEEEEEEKDNNKTT) are disordered. Acidic residues predominate over residues 562 to 586 (EKEEEEKEEEEEEEEEEEEEEEEEK). One copy of the Gelsolin-like 5 repeat lies at 614–692 (IFKADQINPF…EQYNESPLFK (79 aa)). A coiled-coil region spans residues 710-912 (IISYKQKLAE…ETVNEENEVG (203 aa)). Composition is skewed to basic and acidic residues over residues 732–770 (KQQQ…KEEE), 779–808 (EEVK…KEVN), 817–840 (EEVK…KEEE), and 849–900 (EEVK…KVNE). The interval 732–1087 (KQQQEQEQEQ…HNRSSSLTHA (356 aa)) is disordered. The segment covering 901 to 910 (ENETVNEENE) has biased composition (acidic residues). Composition is skewed to polar residues over residues 925–939 (ANSS…NEGS) and 950–961 (EPITPSVVSSSG). Positions 983–1002 (QGRKGGRKSHGKNQPQHKKN) are enriched in basic residues. Polar residues predominate over residues 1018 to 1040 (KSLNLDIDNQSFDLNSINNNNSV). Low complexity predominate over residues 1047–1065 (SSPLSFSSSSINSNSTHNT). The span at 1066–1080 (PSKKNKNKNKKKHNR) shows a compositional bias: basic residues.

This sequence belongs to the villin/gelsolin family. Interacts with rasD and abpC.

Its subcellular location is the cytoplasmic vesicle. Functionally, involved in phototaxis. Required for coupling photodetection to the locomotory machinery of slugs. May be essential in the natural environment for the propagation of spores. The polypeptide is Gelsolin-related protein of 125 kDa (gnrA) (Dictyostelium discoideum (Social amoeba)).